Reading from the N-terminus, the 149-residue chain is MRMNKQIVVTDWIKEKPKLGLFLKLTLSSDERRILRGKRLTDCDQEIILQLPRNGKLNDGDILSTNESNFYVEIIAKTEDLIEISSNSKIELIKTAYHLGNRHVEVEIEEGILLTKSDYVIKNMLLNFKVNVKNTKKKFFPERGAHSHE.

This sequence belongs to the UreE family.

The protein resides in the cytoplasm. Involved in urease metallocenter assembly. Binds nickel. Probably functions as a nickel donor during metallocenter assembly. This chain is Urease accessory protein UreE, found in Prochlorococcus marinus (strain AS9601).